Consider the following 355-residue polypeptide: Histidinol-phosphate aminotransferase (355 aa).

Lysine 218 bears the N6-(pyridoxal phosphate)lysine mark.

Belongs to the class-II pyridoxal-phosphate-dependent aminotransferase family. Histidinol-phosphate aminotransferase subfamily. In terms of assembly, homodimer. It depends on pyridoxal 5'-phosphate as a cofactor.

The catalysed reaction is L-histidinol phosphate + 2-oxoglutarate = 3-(imidazol-4-yl)-2-oxopropyl phosphate + L-glutamate. The protein operates within amino-acid biosynthesis; L-histidine biosynthesis; L-histidine from 5-phospho-alpha-D-ribose 1-diphosphate: step 7/9. The sequence is that of Histidinol-phosphate aminotransferase from Pelodictyon phaeoclathratiforme (strain DSM 5477 / BU-1).